We begin with the raw amino-acid sequence, 294 residues long: tRNA dimethylallyltransferase (294 aa).

10-17 (GPTAVGKT) contacts ATP. Position 12–17 (12–17 (TAVGKT)) interacts with substrate. The interaction with substrate tRNA stretch occupies residues 35 to 38 (DSQQ).

Belongs to the IPP transferase family. Monomer. The cofactor is Mg(2+).

It carries out the reaction adenosine(37) in tRNA + dimethylallyl diphosphate = N(6)-dimethylallyladenosine(37) in tRNA + diphosphate. Catalyzes the transfer of a dimethylallyl group onto the adenine at position 37 in tRNAs that read codons beginning with uridine, leading to the formation of N6-(dimethylallyl)adenosine (i(6)A). This is tRNA dimethylallyltransferase from Streptococcus sanguinis (strain SK36).